The following is an 87-amino-acid chain: uncharacterized protein (87 aa).

Residues 29–49 (ILWMIIFVVIIAVIIYILISP) form a helical membrane-spanning segment.

The protein resides in the membrane. This is an uncharacterized protein from Methanocaldococcus jannaschii (strain ATCC 43067 / DSM 2661 / JAL-1 / JCM 10045 / NBRC 100440) (Methanococcus jannaschii).